Reading from the N-terminus, the 73-residue chain is Defensin-like protein 6 (73 aa).

The signal sequence occupies residues 1–26 (MENKFFAAFFLLLVLFSSQEIIGGEG). Cystine bridges form between Cys-29/Cys-73, Cys-40/Cys-60, Cys-46/Cys-67, and Cys-50/Cys-69.

The protein belongs to the DEFL family.

The protein localises to the secreted. Confers broad-spectrum resistance to pathogens. This Arabidopsis thaliana (Mouse-ear cress) protein is Defensin-like protein 6 (PDF2.5).